A 299-amino-acid chain; its full sequence is 4-hydroxybenzoate octaprenyltransferase (299 aa).

8 helical membrane passes run 33–53, 56–76, 107–127, 151–171, 180–200, 214–234, 247–267, and 278–298; these read VGFL…AGGV, WWTL…GCVI, LLMF…MNQL, LPQV…FAAI, WLLY…CAMV, AILF…LMLF, HTYW…FIIA, and AFMH…LATT.

This sequence belongs to the UbiA prenyltransferase family. Requires Mg(2+) as cofactor.

The protein localises to the cell inner membrane. The catalysed reaction is all-trans-octaprenyl diphosphate + 4-hydroxybenzoate = 4-hydroxy-3-(all-trans-octaprenyl)benzoate + diphosphate. Its pathway is cofactor biosynthesis; ubiquinone biosynthesis. Functionally, catalyzes the prenylation of para-hydroxybenzoate (PHB) with an all-trans polyprenyl group. Mediates the second step in the final reaction sequence of ubiquinone-8 (UQ-8) biosynthesis, which is the condensation of the polyisoprenoid side chain with PHB, generating the first membrane-bound Q intermediate 3-octaprenyl-4-hydroxybenzoate. This chain is 4-hydroxybenzoate octaprenyltransferase, found in Xylella fastidiosa (strain 9a5c).